The sequence spans 191 residues: Protein RER1A (191 aa).

Position 1 is an N-acetylmethionine (M1). A run of 4 helical transmembrane segments spans residues Y39–Y57, G60–L80, F115–S135, and V136–L156.

The protein belongs to the RER1 family.

It is found in the membrane. Its function is as follows. Involved in the retrieval of endoplasmic reticulum membrane proteins from the early Golgi compartment. This Arabidopsis thaliana (Mouse-ear cress) protein is Protein RER1A (RER1A).